The primary structure comprises 933 residues: Serine/threonine-protein kinase PknD (933 aa).

Residues 4-291 enclose the Protein kinase domain; that stretch reads YDIIRMIGKG…ALKADIEQHL (288 aa). ATP contacts are provided by residues 10 to 18 and lysine 33; that span reads IGKGGMGEV. Residue aspartate 138 is the Proton acceptor of the active site.

It belongs to the protein kinase superfamily. Ser/Thr protein kinase family. Post-translationally, autophosphorylated on serine and threonine residues.

It catalyses the reaction L-seryl-[protein] + ATP = O-phospho-L-seryl-[protein] + ADP + H(+). The catalysed reaction is L-threonyl-[protein] + ATP = O-phospho-L-threonyl-[protein] + ADP + H(+). Together with the serine/threonine kinase Pkn1, may play a role in the specific interactions with host proteins during intracellular growth. The chain is Serine/threonine-protein kinase PknD from Chlamydia abortus (strain DSM 27085 / S26/3) (Chlamydophila abortus).